The primary structure comprises 52 residues: Proteinase inhibitor PSI-1.2 (52 aa).

Disulfide bonds link Cys3/Cys32, Cys7/Cys28, Cys16/Cys38, and Cys31/Cys49.

Functionally, potent inhibitor of trypsin and a weaker inhibitor of chymotrypsin. It does not inhibit elastase and subtilisin DY. This is Proteinase inhibitor PSI-1.2 from Capsicum annuum (Capsicum pepper).